A 408-amino-acid polypeptide reads, in one-letter code: 3-hydroxy-3-methylglutaryl-coenzyme A reductase (408 aa).

Catalysis depends on charge relay system residues Glu-101 and Asp-307. His-403 (proton donor) is an active-site residue.

This sequence belongs to the HMG-CoA reductase family.

The enzyme catalyses (R)-mevalonate + 2 NADP(+) + CoA = (3S)-3-hydroxy-3-methylglutaryl-CoA + 2 NADPH + 2 H(+). Its pathway is metabolic intermediate biosynthesis; (R)-mevalonate biosynthesis; (R)-mevalonate from acetyl-CoA: step 3/3. In terms of biological role, converts HMG-CoA to mevalonate. This is 3-hydroxy-3-methylglutaryl-coenzyme A reductase (hmgA) from Pyrococcus abyssi (strain GE5 / Orsay).